A 358-amino-acid polypeptide reads, in one-letter code: DNA polymerase IV (358 aa).

In terms of domain architecture, UmuC spans I4–G185. D8 and D103 together coordinate Mg(2+). Residue E104 is part of the active site.

The protein belongs to the DNA polymerase type-Y family. In terms of assembly, monomer. The cofactor is Mg(2+).

The protein localises to the cytoplasm. It carries out the reaction DNA(n) + a 2'-deoxyribonucleoside 5'-triphosphate = DNA(n+1) + diphosphate. In terms of biological role, poorly processive, error-prone DNA polymerase involved in untargeted mutagenesis. Copies undamaged DNA at stalled replication forks, which arise in vivo from mismatched or misaligned primer ends. These misaligned primers can be extended by PolIV. Exhibits no 3'-5' exonuclease (proofreading) activity. May be involved in translesional synthesis, in conjunction with the beta clamp from PolIII. This chain is DNA polymerase IV, found in Shewanella halifaxensis (strain HAW-EB4).